Consider the following 292-residue polypeptide: MGIAESTPDELPSDAEEQLRSGDQQLELSGRRLRRLPSAVCALSRLQKLYVSGTGLRELPEEIEELRELRILALDFNKLERLPDGLCRLPRLTRLYLGGNRLLALPADFAQLQSLRCLWIEGNFLRRFPRPLLRLVALQSLQMGDNRLRALPAELPRMTGLRGLWLYGNRFEEFPPALLRMGRLHILDLDRNRLGGFPDLHPLRALRVFSYDHNPVTGPPRVADTVFLVGEGAVERMAERDEPTPRPPPRRPARAFEDEEEEDLLIGGAGSRALGAPGGSFRALEAAPGLGT.

Positions M1 to R20 are disordered. Positions T7 to E16 are enriched in acidic residues. LRR repeat units follow at residues G22 to L43, R45 to L66, E68 to P90, R91 to L112, S114 to V136, A137 to M158, G160 to M181, R183 to R204, and A205 to V226. Residues R236–E261 form a disordered region.

The chain is Leucine-rich repeat-containing protein 10B (LRRC10B) from Homo sapiens (Human).